We begin with the raw amino-acid sequence, 473 residues long: MNKKLKYLSKSIKESFDINEINKIAKDSKFIQRKGSITAKDFLMFNVFYGSDICTAPLSQLAAKYDMIFSKQLPKQALDKRFNKYSVEFMKEIFIKFLYSQNNTLTNLERTLRTYFDRVIINDSISFTLPKEFKKKFPGSGGVASPSSIKVQLQYELLTGSFMNIDIFSGIKNDVEYLKTMKKYKDYKDLKLADLGYFKIDYLKRLDKSGTAFISKVKSNTSLYIKNPSPEKYKVGTIKKSSEYIKIDIIKLAEPLAAGETIELTDIYIGSKKELKSRLIITKLTEENKSKRIFNHIEGIKKKRLTLNQRRLDFNSINAYITNVSSNIITMNQVHELYSLRWQIEIIFKVWKSIFKINQVKKVKLERFMCFLYGRLIALLLSSTIVFTSKSIILEVDEKEISELKAFGNLIQYFPKLSFEIFKGEFYISRILKSVLSNFKRFGIKSKKNYKKTAFNILKLIKLESFEVTRFAI.

It belongs to the transposase 11 family.

Functionally, involved in the transposition of the insertion sequence. This chain is Transposase for insertion sequence element IS1151 (tnp), found in Clostridium perfringens.